The following is a 320-amino-acid chain: Ribosomal RNA small subunit methyltransferase H (320 aa).

Residues Gly-36–His-38, Asp-56, Phe-82, Asp-103, and Gln-110 contribute to the S-adenosyl-L-methionine site.

It belongs to the methyltransferase superfamily. RsmH family.

It is found in the cytoplasm. The catalysed reaction is cytidine(1402) in 16S rRNA + S-adenosyl-L-methionine = N(4)-methylcytidine(1402) in 16S rRNA + S-adenosyl-L-homocysteine + H(+). Functionally, specifically methylates the N4 position of cytidine in position 1402 (C1402) of 16S rRNA. This Chromobacterium violaceum (strain ATCC 12472 / DSM 30191 / JCM 1249 / CCUG 213 / NBRC 12614 / NCIMB 9131 / NCTC 9757 / MK) protein is Ribosomal RNA small subunit methyltransferase H.